Here is a 384-residue protein sequence, read N- to C-terminus: Carbamoyl phosphate synthase small chain (384 aa).

The CPSase stretch occupies residues 1 to 189; sequence MSKSALLVLE…GLPEAKDDSE (189 aa). Residues S47, G241, and G243 each coordinate L-glutamine. A Glutamine amidotransferase type-1 domain is found at 193-380; sequence HVVAYDFGAK…IELIKLSVNE (188 aa). C269 serves as the catalytic Nucleophile. The L-glutamine site is built by L270, Q273, N311, G313, and F314. Catalysis depends on residues H353 and E355.

The protein belongs to the CarA family. As to quaternary structure, composed of two chains; the small (or glutamine) chain promotes the hydrolysis of glutamine to ammonia, which is used by the large (or ammonia) chain to synthesize carbamoyl phosphate. Tetramer of heterodimers (alpha,beta)4.

It catalyses the reaction hydrogencarbonate + L-glutamine + 2 ATP + H2O = carbamoyl phosphate + L-glutamate + 2 ADP + phosphate + 2 H(+). It carries out the reaction L-glutamine + H2O = L-glutamate + NH4(+). Its pathway is amino-acid biosynthesis; L-arginine biosynthesis; carbamoyl phosphate from bicarbonate: step 1/1. It functions in the pathway pyrimidine metabolism; UMP biosynthesis via de novo pathway; (S)-dihydroorotate from bicarbonate: step 1/3. Small subunit of the glutamine-dependent carbamoyl phosphate synthetase (CPSase). CPSase catalyzes the formation of carbamoyl phosphate from the ammonia moiety of glutamine, carbonate, and phosphate donated by ATP, constituting the first step of 2 biosynthetic pathways, one leading to arginine and/or urea and the other to pyrimidine nucleotides. The small subunit (glutamine amidotransferase) binds and cleaves glutamine to supply the large subunit with the substrate ammonia. This Photobacterium profundum (strain SS9) protein is Carbamoyl phosphate synthase small chain.